The sequence spans 110 residues: Protein RnfH (110 aa).

The segment at 86–110 is disordered; the sequence is RQRRVEKTRKAGSIEGRRWQNKDSR. A compositionally biased stretch (basic and acidic residues) spans 100–110; it reads EGRRWQNKDSR.

Belongs to the UPF0125 (RnfH) family.

In Paraburkholderia xenovorans (strain LB400), this protein is Protein RnfH.